Reading from the N-terminus, the 378-residue chain is MKILVDENMPYARELFSRLGEVQAVPGRPIPQAALDDADALMVRSVTQVNRDLLAGKNIRFVGTATAGTDHVDEDYLREAGVGFSAAPGCNAIAVVEYVFSALLMLAERDGFALTDRTVGIVGVGNVGSRLQARLEALGVRTLLCDPPRADRGDSGDFRTLDELVREADILTFHTPLFKEGPYKTLHLADEALIARLKPGAILINACRGPVVDNAALLARLEAGQPLSVVLDVWEPEPALNVELLKRVDIGTAHIAGYTLEGKARGTTQVFEAYSQFLGTPQQVALATLLPPPEFGRITLQGPLDQPTLKRLVHLVYDVRRDDAPLRRVAGMPGEFDKLRKNYQERREWSSLYVQCDDEAAAALLQKLGFNATHHPIR.

Serine 45 and threonine 66 together coordinate substrate. Aspartate 146 and threonine 175 together coordinate NAD(+). Arginine 208 is a catalytic residue. Position 232 (aspartate 232) interacts with NAD(+). Glutamate 237 is an active-site residue. Histidine 254 functions as the Proton donor in the catalytic mechanism. Glycine 257 is an NAD(+) binding site. Tyrosine 258 contacts substrate.

Belongs to the D-isomer specific 2-hydroxyacid dehydrogenase family. PdxB subfamily. Homodimer.

It is found in the cytoplasm. It carries out the reaction 4-phospho-D-erythronate + NAD(+) = (R)-3-hydroxy-2-oxo-4-phosphooxybutanoate + NADH + H(+). Its pathway is cofactor biosynthesis; pyridoxine 5'-phosphate biosynthesis; pyridoxine 5'-phosphate from D-erythrose 4-phosphate: step 2/5. Catalyzes the oxidation of erythronate-4-phosphate to 3-hydroxy-2-oxo-4-phosphonooxybutanoate. The sequence is that of Erythronate-4-phosphate dehydrogenase from Cronobacter sakazakii (strain ATCC BAA-894) (Enterobacter sakazakii).